The sequence spans 847 residues: Ras GTPase-activating protein 2 (847 aa).

The segment covering 1-18 (MAAAAPAAAALTEAPAVP) has biased composition (low complexity). Positions 1–31 (MAAAAPAAAALTEAPAVPGTAEPETGDEDSR) are disordered. N-acetylalanine is present on Ala2. 2 consecutive C2 domains span residues 19-137 (GTAE…ETWF) and 148-288 (VQGK…QAWY). The Ras-GAP domain occupies 371 to 588 (NKLVPFITAV…TDVKKFLDEI (218 aa)). Phosphoserine is present on Ser554. The 102-residue stretch at 603–704 (VHLKEGEMYK…WIDMLCRVSR (102 aa)) folds into the PH domain. A Btk-type zinc finger spans residues 706–742 (NHNRLSSFHPSAYLNGNWLCCQETSEGTPGCKPCTAG). Zn(2+)-binding residues include His714, Cys725, Cys726, and Cys736. The tract at residues 819-847 (DEPHEKYRKKRSSSAKYGSKENPIVGKIS) is disordered.

As to expression, widely expressed. Higher expression in brain, placenta, and kidney.

The protein localises to the cell membrane. Its function is as follows. Inhibitory regulator of the Ras-cyclic AMP pathway. May bind inositol tetrakisphosphate (IP4) and phospholipids. This chain is Ras GTPase-activating protein 2 (Rasa2), found in Rattus norvegicus (Rat).